The sequence spans 739 residues: Catalase-peroxidase (739 aa).

Positions 1–20 are disordered; the sequence is MGSNECPYSRQNANIGGGGQ. The segment at residues 94–217 is a cross-link (tryptophyl-tyrosyl-methioninium (Trp-Tyr) (with M-243)); that stretch reads WHSAGTYRVF…LAASHMGLIY (124 aa). His95 acts as the Proton acceptor in catalysis. Positions 217–243 form a cross-link, tryptophyl-tyrosyl-methioninium (Tyr-Met) (with W-94); sequence YVNPEGPNKNPDPVLAAKDIRITFGRM. Residue His258 coordinates heme b.

This sequence belongs to the peroxidase family. Peroxidase/catalase subfamily. Homodimer or homotetramer. Heme b serves as cofactor. In terms of processing, formation of the three residue Trp-Tyr-Met cross-link is important for the catalase, but not the peroxidase activity of the enzyme.

It is found in the cytoplasm. It catalyses the reaction H2O2 + AH2 = A + 2 H2O. It carries out the reaction 2 H2O2 = O2 + 2 H2O. Functionally, bifunctional enzyme with both catalase and broad-spectrum peroxidase activity. The chain is Catalase-peroxidase from Emericella nidulans (strain FGSC A4 / ATCC 38163 / CBS 112.46 / NRRL 194 / M139) (Aspergillus nidulans).